The sequence spans 42 residues: Photosystem I reaction center subunit IX (42 aa).

A helical transmembrane segment spans residues 8-28 (YLSTAPVLLTIWLSFTAALVI).

This sequence belongs to the PsaJ family.

The protein localises to the plastid. Its subcellular location is the chloroplast thylakoid membrane. Its function is as follows. May help in the organization of the PsaE and PsaF subunits. In Guillardia theta (Cryptophyte), this protein is Photosystem I reaction center subunit IX.